The sequence spans 221 residues: Potassium voltage-gated channel subfamily E member 4 (221 aa).

The Extracellular portion of the chain corresponds to 1–86; the sequence is MHFLTIYPNC…AGGGSGNGNE (86 aa). N9 carries an N-linked (GlcNAc...) asparagine glycan. Polar residues predominate over residues 58-72; that stretch reads LNSTHPGTAASSSPL. A disordered region spans residues 58 to 77; that stretch reads LNSTHPGTAASSSPLESRAA. The chain crosses the membrane as a helical span at residues 87 to 107; that stretch reads YFYILVVMSFYGIFLIGIMLG. The Cytoplasmic segment spans residues 108 to 221; the sequence is YMKSKRREKK…GSSENIHQNS (114 aa). Positions 175 to 221 are disordered; sequence SVSSESSSPDVHLTIQEEGADDELEETSETPLNESSEGSSENIHQNS. Residues 192 to 202 show a composition bias toward acidic residues; the sequence is EGADDELEETS. A compositionally biased stretch (polar residues) spans 203–221; sequence ETPLNESSEGSSENIHQNS.

The protein belongs to the potassium channel KCNE family. Forms heterooligomers with KCNA3, inhibiting its activity by impairing localization to the cell membrane. The stoichiometry of KCNA3 and KCNE4 in the heterooligomers are 4:1, 4:2, 4:3 or 4:4 respectively. Increasing the number of KCNE4 subunits steadily slows the activation KCNA3 and decreases its abundance at the cell membrane. However, a single subunit of KCNE4 is sufficient for the cooperative enhancement of the inactivating function of the channel. However, a single subunit of KCNE4 is sufficient for the cooperative enhancement of the inactivating function of the channel. Interacts with KCNQ1; impairs KCNQ1 localization in lipid rafts and inhibits voltage-gated potassium channel activity. In terms of tissue distribution, predominantly expressed in embryo and adult uterus. Low expression found in kidney, small intestine, lung and heart. As to expression, detected in kidney, thymus, and uterus (at protein level).

It is found in the membrane. Functionally, ancillary protein that functions as a regulatory subunit of the voltage-gated potassium (Kv) channel complex composed of pore-forming and potassium-conducting alpha subunits and of regulatory beta subunits. KCNE4 beta subunit modulates the gating kinetics and enhances stability of the channel complex. Associates with KCNQ1/KVLTQ1 alpha subunit to inhibit potassium currents. Its function is as follows. May inhibit KCNQ4-mediated potassium currents. The polypeptide is Potassium voltage-gated channel subfamily E member 4 (Homo sapiens (Human)).